Reading from the N-terminus, the 586-residue chain is Phosphoenolpyruvate-protein phosphotransferase (586 aa).

The Tele-phosphohistidine intermediate role is filled by His201. Positions 308 and 345 each coordinate phosphoenolpyruvate. Mg(2+)-binding residues include Glu446 and Asp470. Phosphoenolpyruvate-binding positions include 469 to 470 (ND) and Arg480. Cys517 acts as the Proton donor in catalysis.

Belongs to the PEP-utilizing enzyme family. Homodimer. Mg(2+) serves as cofactor.

The protein localises to the cytoplasm. It carries out the reaction L-histidyl-[protein] + phosphoenolpyruvate = N(pros)-phospho-L-histidyl-[protein] + pyruvate. Its function is as follows. General (non sugar-specific) component of the phosphoenolpyruvate-dependent sugar phosphotransferase system (sugar PTS). This major carbohydrate active-transport system catalyzes the phosphorylation of incoming sugar substrates concomitantly with their translocation across the cell membrane. Enzyme I transfers the phosphoryl group from phosphoenolpyruvate (PEP) to the phosphoryl carrier protein (HPr). This is Phosphoenolpyruvate-protein phosphotransferase from Cupriavidus necator (strain ATCC 17699 / DSM 428 / KCTC 22496 / NCIMB 10442 / H16 / Stanier 337) (Ralstonia eutropha).